Reading from the N-terminus, the 436-residue chain is Adenylosuccinate synthetase (436 aa).

Residues 21–27 and 49–51 each bind GTP; these read GDEGKGK and GHT. The active-site Proton acceptor is Asp22. Residues Asp22 and Gly49 each coordinate Mg(2+). IMP is bound by residues 22–25, 47–50, Thr135, Arg149, Gln230, Thr245, and Arg309; these read DEGK and NAGH. His50 acts as the Proton donor in catalysis. 305–311 contacts substrate; that stretch reads TTTGRPR. Residues Arg311, 337–339, and 423–425 each bind GTP; these read KVD and SSG.

This sequence belongs to the adenylosuccinate synthetase family. As to quaternary structure, homodimer. The cofactor is Mg(2+).

The protein localises to the cytoplasm. It catalyses the reaction IMP + L-aspartate + GTP = N(6)-(1,2-dicarboxyethyl)-AMP + GDP + phosphate + 2 H(+). It participates in purine metabolism; AMP biosynthesis via de novo pathway; AMP from IMP: step 1/2. Its function is as follows. Plays an important role in the de novo pathway of purine nucleotide biosynthesis. Catalyzes the first committed step in the biosynthesis of AMP from IMP. The protein is Adenylosuccinate synthetase of Thermoplasma volcanium (strain ATCC 51530 / DSM 4299 / JCM 9571 / NBRC 15438 / GSS1).